The sequence spans 755 residues: 1,4-alpha-glucan branching enzyme GlgB (755 aa).

Asp431 functions as the Nucleophile in the catalytic mechanism. Glu484 (proton donor) is an active-site residue.

This sequence belongs to the glycosyl hydrolase 13 family. GlgB subfamily. As to quaternary structure, monomer.

The catalysed reaction is Transfers a segment of a (1-&gt;4)-alpha-D-glucan chain to a primary hydroxy group in a similar glucan chain.. The protein operates within glycan biosynthesis; glycogen biosynthesis. Functionally, catalyzes the formation of the alpha-1,6-glucosidic linkages in glycogen by scission of a 1,4-alpha-linked oligosaccharide from growing alpha-1,4-glucan chains and the subsequent attachment of the oligosaccharide to the alpha-1,6 position. This is 1,4-alpha-glucan branching enzyme GlgB from Prochlorococcus marinus (strain NATL1A).